The chain runs to 443 residues: MAKYFGTDGIRGEVANSTITVEFTQKLGNAVGSLINQKNYPKFVIVGQDTRSSGGFLKFALVSGLNAAGIDVLDLGVVPTPVVAFMTVKYRAAAGFVITASHNKFTDNGIKLFSSNGFKLDDALEEEVEDMIDGDFIYQPQFKFGSYKILANAIDEYIESIHSRFAKFVNYKGKVVVDCAHGAASHNFEALLDKFGINYVSIASNPDGLNINVGCGATCVSNIKKAVKEQKADLGISLDGDADRIIIVDENGQEIDGDGILNILAQYSDICGGTNGIVGTQMTNMSYENHYRANKIPFIRSKVGDRYVLEDLVKYGYKIGGESSGHVINLNFGTTGDGLFTAIQLLAIFSQADKPVSEFKLQGELMQQTLINVPLTKKVAREDLQKVASDVNDVEKRLGNRGRVLLRPSGTEPVLRVMVEADDKSLATNEAEYLVEKVKQKLV.

S101 acts as the Phosphoserine intermediate in catalysis. Mg(2+)-binding residues include S101, D239, D241, and D243. S101 is subject to Phosphoserine.

This sequence belongs to the phosphohexose mutase family. Mg(2+) is required as a cofactor. Post-translationally, activated by phosphorylation.

It carries out the reaction alpha-D-glucosamine 1-phosphate = D-glucosamine 6-phosphate. Functionally, catalyzes the conversion of glucosamine-6-phosphate to glucosamine-1-phosphate. This chain is Phosphoglucosamine mutase, found in Francisella tularensis subsp. tularensis (strain WY96-3418).